Here is a 399-residue protein sequence, read N- to C-terminus: P2X purinoceptor 1 (399 aa).

At 1–28 (MARRLQDELSAFFFEYDTPRMVLVRNKK) the chain is on the cytoplasmic side. A helical transmembrane segment spans residues 29–50 (VGVIFRLIQLVVLVYVIGWVFV). Residues 51–338 (YEKGYQTSSG…IPTMTTIGSG (288 aa)) are Extracellular-facing. Residues K68, K70, and K140 each coordinate CTP. K70 is an ATP binding site. 3 disulfide bridges follow: C117-C165, C126-C149, and C132-C159. N153 and N184 each carry an N-linked (GlcNAc...) asparagine glycan. T186 is a binding site for CTP. T186 is a binding site for ATP. Residue N210 is glycosylated (N-linked (GlcNAc...) asparagine). Cystine bridges form between C217-C227 and C261-C270. S286, N290, and R292 together coordinate ATP. CTP-binding residues include N290 and R292. The N-linked (GlcNAc...) asparagine glycan is linked to N300. K309 lines the CTP pocket. K309 lines the ATP pocket. Positions 331–338 (TMTTIGSG) are pore-forming motif. A helical membrane pass occupies residues 339-358 (IGIFGVATVLCDLLLLHILP). Topologically, residues 359–399 (KRHYYKQKKFKYAEDMGPGEGERDPAATSSTLGLQENMRTS) are cytoplasmic. The interval 374–399 (MGPGEGERDPAATSSTLGLQENMRTS) is disordered. Polar residues predominate over residues 385 to 399 (ATSSTLGLQENMRTS). A phosphoserine mark is found at S387 and S388. T389 is subject to Phosphothreonine.

This sequence belongs to the P2X receptor family. Functional P2XRs are organized as homomeric and heteromeric trimers. Forms heterodimer with P2RX2. Forms heterodimer with P2RX4. Forms heterodimer with P2RX5. In terms of tissue distribution, expressed in smooth muscle of the bladder and arteries.

It localises to the cell membrane. It catalyses the reaction Ca(2+)(in) = Ca(2+)(out). The enzyme catalyses K(+)(in) = K(+)(out). The catalysed reaction is Na(+)(in) = Na(+)(out). Activated by low concentrations of ATP (&lt;1 uM). Undergoes rapid desensitisation. Sensitives to the ATP agonist:alpha/beta-methylene-ATP. Modulated by cholesterol. ATP-gated nonselective transmembrane cation channel permeable to potassium, sodium and with relatively high calcium permeability. Furthermore, CTP functions as a weak affinity agonist for P2RX1. Plays a role in male fertility, bladder contraction and platelet aggregation. Specifically, plays an important role in neurogenic contraction of smooth muscle of the vas deferens, and therefore is essential for normal male reproductive function. In addition, contributes to smooth muscle contractions of the urinary bladder. On platelets, contributes to platelet activation and aggregation and thereby, also to thrombosis. On neutrophils, it is involved in chemotaxis and in mitigating the activation of circulating cells. In Mus musculus (Mouse), this protein is P2X purinoceptor 1 (P2rx1).